A 134-amino-acid polypeptide reads, in one-letter code: Putative nickel-responsive regulator (134 aa).

Residues His-78, His-89, His-91, and Cys-97 each contribute to the Ni(2+) site.

Belongs to the transcriptional regulatory CopG/NikR family. The cofactor is Ni(2+).

Functionally, transcriptional regulator. The polypeptide is Putative nickel-responsive regulator (Chlorobium phaeobacteroides (strain DSM 266 / SMG 266 / 2430)).